The primary structure comprises 558 residues: Acylase ACY 1 proenzyme (558 aa).

Residue T368 is the Nucleophile of the active site.

This sequence belongs to the gamma-glutamyltransferase family. Dimer of two non-identical chains processed from the same precursor.

It carries out the reaction (7R)-7-(4-carboxybutanamido)cephalosporanate + H2O = (7R)-7-aminocephalosporanate + glutarate. The enzyme catalyses an N-terminal (5-L-glutamyl)-[peptide] + an alpha-amino acid = 5-L-glutamyl amino acid + an N-terminal L-alpha-aminoacyl-[peptide]. It catalyses the reaction glutathione + H2O = L-cysteinylglycine + L-glutamate. The catalysed reaction is an S-substituted glutathione + H2O = an S-substituted L-cysteinylglycine + L-glutamate. Besides the cephalosporin acylase I activity which converts GL-7ACA into 7-ACA; this enzyme displays some gamma glutamyltranspeptidase activity. The protein is Acylase ACY 1 proenzyme (acyI) of Pseudomonas sp. (strain SE83).